Consider the following 401-residue polypeptide: 3-sulfinopropanoyl-CoA desulfinase (401 aa).

Residues 121–124 (ICIS), Ser130, and 153–156 (YWIT) contribute to the FAD site. Substrate is bound at residue 243–244 (YN). Residues Arg272, Gln339, Ser343, 366–370 (GGTAQ), and Gln387 each bind FAD.

It belongs to the acyl-CoA dehydrogenase family. As to quaternary structure, homotetramer. FAD serves as cofactor.

The enzyme catalyses 3-sulfinopropanoyl-CoA + H2O = propanoyl-CoA + sulfite + H(+). Catalyzes the conversion 3-sulfinopropanoyl-CoA (3SP-CoA) to propanoyl-CoA by abstraction of sulfite. Does not show dehydrogenase activity. Involved in the degradation of 3,3'-dithiodipropionate (DTDP), a sulfur-containing precursor substrate for biosynthesis of polythioesters (PTEs). The chain is 3-sulfinopropanoyl-CoA desulfinase from Advenella mimigardefordensis (strain DSM 17166 / LMG 22922 / DPN7).